Here is a 255-residue protein sequence, read N- to C-terminus: Fumarate reductase cytochrome b subunit (255 aa).

5 helical membrane-spanning segments follow: residues 33 to 53 (TGLI…SILI), 78 to 98 (IVSV…FLAL), 126 to 146 (WFIQ…HLFV), 168 to 188 (FWLL…IGLY), and 208 to 228 (IKWA…GAYI). The heme b site is built by His44, His93, His143, and His182.

It belongs to the diheme cytochrome b FrdC family. Part of an enzyme complex containing three subunits: a flavoprotein (frdA), an iron-sulfur protein (frdB), and diheme cytochrome b (frdC). Requires heme b as cofactor.

It is found in the cell inner membrane. In terms of biological role, the fumarate reductase enzyme complex is required for fumarate respiration. This subunit anchors the complex in the membrane and binds a diheme cytochrome b. The protein is Fumarate reductase cytochrome b subunit (frdC) of Helicobacter pylori (strain J99 / ATCC 700824) (Campylobacter pylori J99).